Consider the following 101-residue polypeptide: Small ribosomal subunit protein uS14 (101 aa).

Belongs to the universal ribosomal protein uS14 family. In terms of assembly, part of the 30S ribosomal subunit. Contacts proteins S3 and S10.

Its function is as follows. Binds 16S rRNA, required for the assembly of 30S particles and may also be responsible for determining the conformation of the 16S rRNA at the A site. The chain is Small ribosomal subunit protein uS14 from Corynebacterium efficiens (strain DSM 44549 / YS-314 / AJ 12310 / JCM 11189 / NBRC 100395).